The chain runs to 1263 residues: DNA-directed RNA polymerase subunit beta (1263 aa).

It belongs to the RNA polymerase beta chain family. The RNAP catalytic core consists of 2 alpha, 1 beta, 1 beta' and 1 omega subunit. When a sigma factor is associated with the core the holoenzyme is formed, which can initiate transcription.

The enzyme catalyses RNA(n) + a ribonucleoside 5'-triphosphate = RNA(n+1) + diphosphate. Its function is as follows. DNA-dependent RNA polymerase catalyzes the transcription of DNA into RNA using the four ribonucleoside triphosphates as substrates. This is DNA-directed RNA polymerase subunit beta from Thermotoga sp. (strain RQ2).